The primary structure comprises 370 residues: UDP-N-acetylglucosamine--N-acetylmuramyl-(pentapeptide) pyrophosphoryl-undecaprenol N-acetylglucosamine transferase (370 aa).

Residues 15–17 (TGG), asparagine 126, arginine 169, serine 197, and glutamine 299 contribute to the UDP-N-acetyl-alpha-D-glucosamine site.

The protein belongs to the glycosyltransferase 28 family. MurG subfamily.

Its subcellular location is the cell inner membrane. It carries out the reaction di-trans,octa-cis-undecaprenyl diphospho-N-acetyl-alpha-D-muramoyl-L-alanyl-D-glutamyl-meso-2,6-diaminopimeloyl-D-alanyl-D-alanine + UDP-N-acetyl-alpha-D-glucosamine = di-trans,octa-cis-undecaprenyl diphospho-[N-acetyl-alpha-D-glucosaminyl-(1-&gt;4)]-N-acetyl-alpha-D-muramoyl-L-alanyl-D-glutamyl-meso-2,6-diaminopimeloyl-D-alanyl-D-alanine + UDP + H(+). The protein operates within cell wall biogenesis; peptidoglycan biosynthesis. Cell wall formation. Catalyzes the transfer of a GlcNAc subunit on undecaprenyl-pyrophosphoryl-MurNAc-pentapeptide (lipid intermediate I) to form undecaprenyl-pyrophosphoryl-MurNAc-(pentapeptide)GlcNAc (lipid intermediate II). This is UDP-N-acetylglucosamine--N-acetylmuramyl-(pentapeptide) pyrophosphoryl-undecaprenol N-acetylglucosamine transferase from Methylorubrum populi (strain ATCC BAA-705 / NCIMB 13946 / BJ001) (Methylobacterium populi).